We begin with the raw amino-acid sequence, 238 residues long: Thiamine import ATP-binding protein ThiQ (238 aa).

One can recognise an ABC transporter domain in the interval 2–230 (LALDKVRYEY…HPHPELAQFV (229 aa)). 32 to 39 (GPSGAGKS) provides a ligand contact to ATP.

This sequence belongs to the ABC transporter superfamily. Thiamine importer (TC 3.A.1.19.1) family. In terms of assembly, the complex is composed of two ATP-binding proteins (ThiQ), two transmembrane proteins (ThiP) and a solute-binding protein (ThiB).

The protein resides in the cell inner membrane. The catalysed reaction is thiamine(out) + ATP + H2O = thiamine(in) + ADP + phosphate + H(+). In terms of biological role, part of the ABC transporter complex ThiBPQ involved in thiamine import. Responsible for energy coupling to the transport system. The sequence is that of Thiamine import ATP-binding protein ThiQ from Vibrio cholerae serotype O1 (strain ATCC 39315 / El Tor Inaba N16961).